Here is a 207-residue protein sequence, read N- to C-terminus: N-(5'-phosphoribosyl)anthranilate isomerase (207 aa).

The protein belongs to the TrpF family.

It catalyses the reaction N-(5-phospho-beta-D-ribosyl)anthranilate = 1-(2-carboxyphenylamino)-1-deoxy-D-ribulose 5-phosphate. It participates in amino-acid biosynthesis; L-tryptophan biosynthesis; L-tryptophan from chorismate: step 3/5. This is N-(5'-phosphoribosyl)anthranilate isomerase from Halorhodospira halophila (strain DSM 244 / SL1) (Ectothiorhodospira halophila (strain DSM 244 / SL1)).